The following is a 431-amino-acid chain: Glucose-1-phosphate adenylyltransferase (431 aa).

Beta-D-fructose 1,6-bisphosphate is bound at residue Lys39. AMP-binding residues include Arg40, His46, and Arg52. Tyr114 is an alpha-D-glucose 1-phosphate binding site. Arg130 lines the AMP pocket. Alpha-D-glucose 1-phosphate is bound by residues Gly179, 194–195 (EK), and Ser212. Arg386 is a binding site for AMP. 429–431 (QER) serves as a coordination point for beta-D-fructose 1,6-bisphosphate.

This sequence belongs to the bacterial/plant glucose-1-phosphate adenylyltransferase family. Homotetramer.

The enzyme catalyses alpha-D-glucose 1-phosphate + ATP + H(+) = ADP-alpha-D-glucose + diphosphate. It functions in the pathway glycan biosynthesis; glycogen biosynthesis. With respect to regulation, allosterically activated by fructose-1,6-bisphosphate (F16BP) and inhibited by AMP. Functionally, involved in the biosynthesis of ADP-glucose, a building block required for the elongation reactions to produce glycogen. Catalyzes the reaction between ATP and alpha-D-glucose 1-phosphate (G1P) to produce pyrophosphate and ADP-Glc. This chain is Glucose-1-phosphate adenylyltransferase, found in Klebsiella pneumoniae subsp. pneumoniae (strain ATCC 700721 / MGH 78578).